The sequence spans 399 residues: Oligoribonuclease NrnB (399 aa).

Mn(2+) is required as a cofactor. Co(2+) serves as cofactor. Requires Mg(2+) as cofactor.

The protein resides in the cytoplasm. Functionally, degrades RNA oligonucleotides with a length of 5 nucleotides in a 3'- to 5'-direction. Less active on shorter RNA oligonucleotides and on those with a length of 24 nucleotides. Prefers RNA oligonucleotides containing adenines rather than cytosines. In Bacillus subtilis (strain 168), this protein is Oligoribonuclease NrnB (nrnB).